The following is a 159-amino-acid chain: Putative phosphatidylinositol-3-phosphatase (159 aa).

The first 16 residues, 1-16, serve as a signal peptide directing secretion; that stretch reads MKRPSFLPVLIGTGFG. A run of 4 helical transmembrane segments spans residues 30–50, 54–74, 104–124, and 134–154; these read LLAS…ALLW, ALVV…ESCW, WYVI…PLGV, and VGVM…IAVA.

Its subcellular location is the membrane. The enzyme catalyses a 1,2-diacyl-sn-glycero-3-phospho-(1D-myo-inositol-3-phosphate) + H2O = a 1,2-diacyl-sn-glycero-3-phospho-(1D-myo-inositol) + phosphate. May be responsible for the conversion of phosphatidylinositol phosphate diacylglycerol (PIP-DAG) to phosphatidylinositol diacylglycerol (PI-DAG), making it a key enzyme in the inositol glycerophospholipid biosynthesis pathway. In Bacteroides thetaiotaomicron (strain ATCC 29148 / DSM 2079 / JCM 5827 / CCUG 10774 / NCTC 10582 / VPI-5482 / E50), this protein is Putative phosphatidylinositol-3-phosphatase.